A 219-amino-acid chain; its full sequence is Germin-like protein subfamily 2 member 3 (219 aa).

An N-terminal signal peptide occupies residues 1–22 (MATSMIPIFVTFMLVAAHMALA). Cysteine 31 and cysteine 46 are joined by a disulfide. The Cupin type-1 domain occupies 60-209 (IGLATAAATA…AFGAAAPEIQ (150 aa)). The N-linked (GlcNAc...) asparagine glycan is linked to asparagine 70. Mn(2+) contacts are provided by histidine 109, histidine 111, glutamate 116, and histidine 155.

Belongs to the germin family. In terms of assembly, oligomer (believed to be a pentamer but probably hexamer).

The protein resides in the secreted. The protein localises to the extracellular space. It is found in the apoplast. In terms of biological role, may play a role in plant defense. Probably has no oxalate oxidase activity even if the active site is conserved. The protein is Germin-like protein subfamily 2 member 3 (GLP8) of Arabidopsis thaliana (Mouse-ear cress).